Here is a 1374-residue protein sequence, read N- to C-terminus: Sterol 3-beta-glucosyltransferase (1374 aa).

Over residues 1–14 the composition is skewed to basic and acidic residues; it reads MRPLRDDAKRRADR. 3 disordered regions span residues 1-60, 83-190, and 206-227; these read MRPL…RDGN, ARFD…PRAA, and TSAT…QPQS. Residues 16–28 show a composition bias toward polar residues; the sequence is LSASMKPTSSNRP. Residues 29–41 show a composition bias toward basic and acidic residues; that stretch reads FSDRVPDRFKDGD. Positions 101 to 112 are enriched in polar residues; sequence VEQTTGKASSRT. Over residues 125–138 the composition is skewed to basic and acidic residues; the sequence is KRSEPSKLVLEERG. The GRAM 1 domain maps to 234-283; the sequence is MRLMKMFEFAKPEKVLVEYACSLLQSMLLQGYMYVTEGHICFYAYLPKKS. Residues 285–382 enclose the PH domain; that stretch reads VAIKSGYLSK…WVKALQQVIF (98 aa). The tract at residues 458–538 is disordered; it reads ATKEAQDQHD…SMTDTTESAS (81 aa). 2 stretches are compositionally biased toward basic and acidic residues: residues 461 to 473 and 490 to 499; these read EAQD…HQPE and SDQRREDSPR. A compositionally biased stretch (polar residues) spans 503–538; sequence SSVGNENQGSADSFAEQGTGSSPIIQSMTDTTESAS. In terms of domain architecture, GRAM 2 spans 704–770; the sequence is DRFRAHFALP…KDIENVEKEK (67 aa). UDP-alpha-D-glucose contacts are provided by S893, R894, D896, A1196, H1198, H1211, G1215, T1216, D1235, and Q1236. Positions 1314-1325 are enriched in polar residues; sequence ASSTPFSPTPTA. The interval 1314 to 1338 is disordered; sequence ASSTPFSPTPTAKASPDGGDDDLDD.

This sequence belongs to the glycosyltransferase 28 family.

Its subcellular location is the cytoplasm. The protein localises to the preautophagosomal structure membrane. It carries out the reaction a sterol + UDP-alpha-D-glucose = a sterol 3-beta-D-glucoside + UDP + H(+). The catalysed reaction is ergosterol + UDP-alpha-D-glucose = ergosteryl 3-beta-D-glucoside + UDP + H(+). Sterol glycosyltransferase responsible for the glycosylation of ergosterol to form ergosterol-glucoside. The sequence is that of Sterol 3-beta-glucosyltransferase from Penicillium rubens (strain ATCC 28089 / DSM 1075 / NRRL 1951 / Wisconsin 54-1255) (Penicillium chrysogenum).